An 89-amino-acid polypeptide reads, in one-letter code: Small ribosomal subunit protein uS14A (89 aa).

This sequence belongs to the universal ribosomal protein uS14 family. In terms of assembly, part of the 30S ribosomal subunit. Contacts proteins S3 and S10.

Binds 16S rRNA, required for the assembly of 30S particles and may also be responsible for determining the conformation of the 16S rRNA at the A site. The polypeptide is Small ribosomal subunit protein uS14A (Staphylococcus aureus (strain Newman)).